Reading from the N-terminus, the 311-residue chain is Malate dehydrogenase (311 aa).

NAD(+) is bound by residues 7 to 13 and aspartate 34; that span reads GAAGGIG. The substrate site is built by arginine 81 and arginine 87. Residues asparagine 94 and 117–119 contribute to the NAD(+) site; that span reads ITN. Residues asparagine 119 and arginine 153 each contribute to the substrate site. The Proton acceptor role is filled by histidine 177. Position 227 (methionine 227) interacts with NAD(+).

The protein belongs to the LDH/MDH superfamily. MDH type 1 family. Homodimer.

The enzyme catalyses (S)-malate + NAD(+) = oxaloacetate + NADH + H(+). Its function is as follows. Catalyzes the reversible oxidation of malate to oxaloacetate. This is Malate dehydrogenase from Shewanella sediminis (strain HAW-EB3).